Reading from the N-terminus, the 490-residue chain is Hexokinase (490 aa).

Residues 21–466 form the Hexokinase domain; it reads QNLLEHIKHF…SGVGAALIAA (446 aa). Positions 75 to 209 are hexokinase small subdomain; it reads DGKETGTFLA…GLPIKVAALI (135 aa). The interval 210–455 is hexokinase large subdomain; that stretch reads NDTTGTLIAS…DKVTIHAAED (246 aa).

The protein belongs to the hexokinase family. As to quaternary structure, monomer.

It catalyses the reaction a D-hexose + ATP = a D-hexose 6-phosphate + ADP + H(+). It carries out the reaction D-fructose + ATP = D-fructose 6-phosphate + ADP + H(+). The enzyme catalyses D-glucose + ATP = D-glucose 6-phosphate + ADP + H(+). The protein operates within carbohydrate metabolism; hexose metabolism. Its pathway is carbohydrate degradation; glycolysis; D-glyceraldehyde 3-phosphate and glycerone phosphate from D-glucose: step 1/4. Its function is as follows. Catalyzes the phosphorylation of hexose, such as D-glucose and D-fructose, to hexose 6-phosphate (D-glucose 6-phosphate and D-fructose 6-phosphate, respectively). Mediates the initial step of glycolysis by catalyzing phosphorylation of D-glucose to D-glucose 6-phosphate. In Emericella nidulans (strain FGSC A4 / ATCC 38163 / CBS 112.46 / NRRL 194 / M139) (Aspergillus nidulans), this protein is Hexokinase (hxkA).